The following is a 227-amino-acid chain: Mitochondrial inner membrane protease ATP23 (227 aa).

An a divalent metal cation-binding site is contributed by H124. Residue E125 is part of the active site. H128 provides a ligand contact to a divalent metal cation.

Belongs to the peptidase M76 family. As to quaternary structure, interacts with ATP6.

It localises to the mitochondrion inner membrane. Functionally, has a dual role in the assembly of mitochondrial ATPase. Acts as a protease that removes the N-terminal 10 residues of mitochondrial ATPase CF(0) subunit 6 (ATP6) at the intermembrane space side. Also involved in the correct assembly of the membrane-embedded ATPase CF(0) particle, probably mediating association of ATP6 with the subunit 9 ring. This chain is Mitochondrial inner membrane protease ATP23 (ATP23), found in Saccharomyces cerevisiae (strain YJM789) (Baker's yeast).